The sequence spans 658 residues: Threonine--tRNA ligase (658 aa).

A TGS domain is found at 1–63 (MDQITITFPD…DDNASIDFVA (63 aa)). The segment at 245 to 548 (DHRKLGRELD…LIEHYAGNFP (304 aa)) is catalytic. Zn(2+) contacts are provided by cysteine 341, histidine 392, and histidine 525.

This sequence belongs to the class-II aminoacyl-tRNA synthetase family. Homodimer. The cofactor is Zn(2+).

It localises to the cytoplasm. The catalysed reaction is tRNA(Thr) + L-threonine + ATP = L-threonyl-tRNA(Thr) + AMP + diphosphate + H(+). In terms of biological role, catalyzes the attachment of threonine to tRNA(Thr) in a two-step reaction: L-threonine is first activated by ATP to form Thr-AMP and then transferred to the acceptor end of tRNA(Thr). Also edits incorrectly charged L-seryl-tRNA(Thr). The polypeptide is Threonine--tRNA ligase (Rhodopseudomonas palustris (strain ATCC BAA-98 / CGA009)).